The chain runs to 99 residues: Small integral membrane protein 14 (99 aa).

Residues 1-49 are Lumenal-facing; the sequence is MAEGGFDPCECVCSHEHAMRRLINLLRQSQSYCTDTECLQELPGPSGDN. Residues 50-70 form a helical membrane-spanning segment; the sequence is GISVTMILVAWMVIALILFLL. The Cytoplasmic segment spans residues 71–99; sequence RPPNLRGSNLPGKPTSPHNGQDPPAPPVD. The segment at 77–99 is disordered; sequence GSNLPGKPTSPHNGQDPPAPPVD.

It is found in the endoplasmic reticulum membrane. This chain is Small integral membrane protein 14 (SMIM14), found in Pongo abelii (Sumatran orangutan).